The following is a 306-amino-acid chain: Acetaldehyde dehydrogenase 3 (306 aa).

The Acyl-thioester intermediate role is filled by Cys131. NAD(+)-binding positions include 162–170 (SVGPGTRKN) and Asn273.

The protein belongs to the acetaldehyde dehydrogenase family.

The enzyme catalyses acetaldehyde + NAD(+) + CoA = acetyl-CoA + NADH + H(+). The sequence is that of Acetaldehyde dehydrogenase 3 from Burkholderia lata (strain ATCC 17760 / DSM 23089 / LMG 22485 / NCIMB 9086 / R18194 / 383).